The chain runs to 154 residues: 6,7-dimethyl-8-ribityllumazine synthase (154 aa).

5-amino-6-(D-ribitylamino)uracil is bound by residues phenylalanine 22, 56–58, and 81–83; these read AFE and VLI. 86–87 lines the (2S)-2-hydroxy-3-oxobutyl phosphate pocket; sequence ET. The active-site Proton donor is the histidine 89. A 5-amino-6-(D-ribitylamino)uracil-binding site is contributed by leucine 114. Arginine 128 contacts (2S)-2-hydroxy-3-oxobutyl phosphate.

It belongs to the DMRL synthase family.

The catalysed reaction is (2S)-2-hydroxy-3-oxobutyl phosphate + 5-amino-6-(D-ribitylamino)uracil = 6,7-dimethyl-8-(1-D-ribityl)lumazine + phosphate + 2 H2O + H(+). The protein operates within cofactor biosynthesis; riboflavin biosynthesis; riboflavin from 2-hydroxy-3-oxobutyl phosphate and 5-amino-6-(D-ribitylamino)uracil: step 1/2. Catalyzes the formation of 6,7-dimethyl-8-ribityllumazine by condensation of 5-amino-6-(D-ribitylamino)uracil with 3,4-dihydroxy-2-butanone 4-phosphate. This is the penultimate step in the biosynthesis of riboflavin. The sequence is that of 6,7-dimethyl-8-ribityllumazine synthase from Chlamydia pneumoniae (Chlamydophila pneumoniae).